Consider the following 274-residue polypeptide: Ubiquinone biosynthesis O-methyltransferase, mitochondrial (274 aa).

The N-terminal 30 residues, 1-30, are a transit peptide targeting the mitochondrion; sequence MNSMNILNKVKNVKSYTRLVRQGFLSQQRN. R65, G88, D109, and M154 together coordinate S-adenosyl-L-methionine. Mg(2+) contacts are provided by E155, E158, and H159.

This sequence belongs to the class I-like SAM-binding methyltransferase superfamily. UbiG/COQ3 family. Component of a multi-subunit COQ enzyme complex, composed of at least coq3, coq4, coq5, coq6, coq7 and coq9. Requires Mg(2+) as cofactor.

The protein resides in the mitochondrion inner membrane. The catalysed reaction is 3,4-dihydroxy-5-(all-trans-decaprenyl)benzoate + S-adenosyl-L-methionine = 4-hydroxy-3-methoxy-5-(all-trans-decaprenyl)benzoate + S-adenosyl-L-homocysteine + H(+). It catalyses the reaction a 3-demethylubiquinone + S-adenosyl-L-methionine = a ubiquinone + S-adenosyl-L-homocysteine. The enzyme catalyses 3-demethylubiquinol-10 + S-adenosyl-L-methionine = ubiquinol-10 + S-adenosyl-L-homocysteine + H(+). It functions in the pathway cofactor biosynthesis; ubiquinone biosynthesis. O-methyltransferase required for two non-consecutive steps during ubiquinone biosynthesis. Catalyzes the 2 O-methylation of 3,4-dihydroxy-5-(all-trans-decaprenyl)benzoic acid into 4-hydroxy-3-methoxy-5-(all-trans-decaprenyl)benzoic acid. Also catalyzes the last step of ubiquinone biosynthesis by mediating methylation of 3-demethylubiquinone into ubiquinone. Also able to mediate the methylation of 3-demethylubiquinol-10 into ubiquinol-10. This chain is Ubiquinone biosynthesis O-methyltransferase, mitochondrial, found in Schizosaccharomyces pombe (strain 972 / ATCC 24843) (Fission yeast).